We begin with the raw amino-acid sequence, 456 residues long: Outer membrane protein assembly factor BamB (456 aa).

Residues 1-19 form the signal peptide; it reads MKKLLFITAPLLLSVLTAS. A lipid anchor (N-palmitoyl cysteine) is attached at Cys20. Residue Cys20 is the site of S-diacylglycerol cysteine attachment.

Belongs to the BamB family. In terms of assembly, part of the Bam complex.

Its subcellular location is the cell outer membrane. Part of the outer membrane protein assembly complex, which is involved in assembly and insertion of beta-barrel proteins into the outer membrane. The polypeptide is Outer membrane protein assembly factor BamB (Francisella tularensis subsp. tularensis (strain SCHU S4 / Schu 4)).